The chain runs to 314 residues: 4-hydroxy-3-methylbut-2-enyl diphosphate reductase (314 aa).

Cys-12 provides a ligand contact to [4Fe-4S] cluster. (2E)-4-hydroxy-3-methylbut-2-enyl diphosphate contacts are provided by His-43 and His-81. Dimethylallyl diphosphate-binding residues include His-43 and His-81. Isopentenyl diphosphate contacts are provided by His-43 and His-81. Cys-103 is a binding site for [4Fe-4S] cluster. Residue His-131 participates in (2E)-4-hydroxy-3-methylbut-2-enyl diphosphate binding. A dimethylallyl diphosphate-binding site is contributed by His-131. His-131 serves as a coordination point for isopentenyl diphosphate. Glu-133 serves as the catalytic Proton donor. Thr-170 provides a ligand contact to (2E)-4-hydroxy-3-methylbut-2-enyl diphosphate. Position 198 (Cys-198) interacts with [4Fe-4S] cluster. Residues Ser-226, Asn-228, and Ser-271 each coordinate (2E)-4-hydroxy-3-methylbut-2-enyl diphosphate. Dimethylallyl diphosphate-binding residues include Ser-226, Asn-228, and Ser-271. The isopentenyl diphosphate site is built by Ser-226, Asn-228, and Ser-271.

Belongs to the IspH family. The cofactor is [4Fe-4S] cluster.

It catalyses the reaction isopentenyl diphosphate + 2 oxidized [2Fe-2S]-[ferredoxin] + H2O = (2E)-4-hydroxy-3-methylbut-2-enyl diphosphate + 2 reduced [2Fe-2S]-[ferredoxin] + 2 H(+). The catalysed reaction is dimethylallyl diphosphate + 2 oxidized [2Fe-2S]-[ferredoxin] + H2O = (2E)-4-hydroxy-3-methylbut-2-enyl diphosphate + 2 reduced [2Fe-2S]-[ferredoxin] + 2 H(+). The protein operates within isoprenoid biosynthesis; dimethylallyl diphosphate biosynthesis; dimethylallyl diphosphate from (2E)-4-hydroxy-3-methylbutenyl diphosphate: step 1/1. It participates in isoprenoid biosynthesis; isopentenyl diphosphate biosynthesis via DXP pathway; isopentenyl diphosphate from 1-deoxy-D-xylulose 5-phosphate: step 6/6. Its function is as follows. Catalyzes the conversion of 1-hydroxy-2-methyl-2-(E)-butenyl 4-diphosphate (HMBPP) into a mixture of isopentenyl diphosphate (IPP) and dimethylallyl diphosphate (DMAPP). Acts in the terminal step of the DOXP/MEP pathway for isoprenoid precursor biosynthesis. The protein is 4-hydroxy-3-methylbut-2-enyl diphosphate reductase of Bacillus subtilis (strain 168).